Reading from the N-terminus, the 292-residue chain is Homoserine kinase (292 aa).

Residue 84–94 (PFSRGLGSSSA) participates in ATP binding.

It belongs to the GHMP kinase family. Homoserine kinase subfamily.

Its subcellular location is the cytoplasm. The enzyme catalyses L-homoserine + ATP = O-phospho-L-homoserine + ADP + H(+). The protein operates within amino-acid biosynthesis; L-threonine biosynthesis; L-threonine from L-aspartate: step 4/5. Catalyzes the ATP-dependent phosphorylation of L-homoserine to L-homoserine phosphate. The chain is Homoserine kinase from Campylobacter hominis (strain ATCC BAA-381 / DSM 21671 / CCUG 45161 / LMG 19568 / NCTC 13146 / CH001A).